Reading from the N-terminus, the 615-residue chain is DNA mismatch repair protein MutL (615 aa).

The tract at residues 363–397 (FAEPAAREPVAPRYTPAPASGSRPAAPWPNAQPGY) is disordered. Residues 364 to 391 (AEPAAREPVAPRYTPAPASGSRPAAPWP) show a composition bias toward low complexity.

It belongs to the DNA mismatch repair MutL/HexB family.

Functionally, this protein is involved in the repair of mismatches in DNA. It is required for dam-dependent methyl-directed DNA mismatch repair. May act as a 'molecular matchmaker', a protein that promotes the formation of a stable complex between two or more DNA-binding proteins in an ATP-dependent manner without itself being part of a final effector complex. This chain is DNA mismatch repair protein MutL, found in Shigella boydii serotype 18 (strain CDC 3083-94 / BS512).